The sequence spans 262 residues: Cyclin-dependent kinase inhibitor 1 (262 aa).

Residues 140-212 (SDVAEAGSEH…SAQQATRPKI (73 aa)) are disordered. Basic and acidic residues predominate over residues 160–169 (SGRDRERRET). The segment covering 198 to 208 (SAATASAQQAT) has biased composition (low complexity).

The protein belongs to the CDI family. ICK/KRP subfamily. Expressed in roots, stems, leaves and apex.

Regulates the production of endosperm cells, affecting seed filling and embryo development. Regulates endoreduplication of endosperm cells. May play a role in the exit from the mitotic cell cycle during rice grain formation. Inhibitis leaf elongation rates by decreasing cell number, that is partly compensated by increased cell size. May not affect growth rate or cell size of the primary root. This is Cyclin-dependent kinase inhibitor 1 (KRP1) from Oryza sativa subsp. japonica (Rice).